The chain runs to 134 residues: Cytochrome b5 (134 aa).

The residue at position 2 (A2) is an N-acetylalanine. N6-acetyllysine is present on residues K7, K10, and K19. The Cytochrome b5 heme-binding domain maps to 9 to 85 (VKYYTLEEIK…SKTFIIGELH (77 aa)). Residues H44 and H68 each contribute to the heme site. A helical membrane pass occupies residues 109-131 (WWTNWVIPAISALIVALMYRLYM).

Belongs to the cytochrome b5 family.

Its subcellular location is the endoplasmic reticulum membrane. The protein localises to the microsome membrane. Functionally, cytochrome b5 is a membrane-bound hemoprotein functioning as an electron carrier for several membrane-bound oxygenases. The chain is Cytochrome b5 (CYB5A) from Oryctolagus cuniculus (Rabbit).